We begin with the raw amino-acid sequence, 331 residues long: GTP 3',8-cyclase (331 aa).

Positions 6 to 234 constitute a Radical SAM core domain; it reads PFNRKIDYLR…PATGKSHDGP (229 aa). GTP is bound at residue arginine 15. Cysteine 22 and cysteine 26 together coordinate [4Fe-4S] cluster. Tyrosine 28 serves as a coordination point for S-adenosyl-L-methionine. Cysteine 29 contributes to the [4Fe-4S] cluster binding site. Arginine 66 provides a ligand contact to GTP. Position 70 (glycine 70) interacts with S-adenosyl-L-methionine. Serine 97 serves as a coordination point for GTP. Serine 121 provides a ligand contact to S-adenosyl-L-methionine. GTP is bound at residue lysine 158. An S-adenosyl-L-methionine-binding site is contributed by methionine 192. Residues cysteine 258 and cysteine 261 each coordinate [4Fe-4S] cluster. 263–265 contributes to the GTP binding site; it reads RVR. Residue cysteine 275 coordinates [4Fe-4S] cluster.

The protein belongs to the radical SAM superfamily. MoaA family. In terms of assembly, monomer and homodimer. [4Fe-4S] cluster is required as a cofactor.

The catalysed reaction is GTP + AH2 + S-adenosyl-L-methionine = (8S)-3',8-cyclo-7,8-dihydroguanosine 5'-triphosphate + 5'-deoxyadenosine + L-methionine + A + H(+). The protein operates within cofactor biosynthesis; molybdopterin biosynthesis. Its function is as follows. Catalyzes the cyclization of GTP to (8S)-3',8-cyclo-7,8-dihydroguanosine 5'-triphosphate. This Hydrogenovibrio crunogenus (strain DSM 25203 / XCL-2) (Thiomicrospira crunogena) protein is GTP 3',8-cyclase.